A 74-amino-acid polypeptide reads, in one-letter code: Small ribosomal subunit protein eS17 (74 aa).

It belongs to the eukaryotic ribosomal protein eS17 family.

In Aeropyrum pernix (strain ATCC 700893 / DSM 11879 / JCM 9820 / NBRC 100138 / K1), this protein is Small ribosomal subunit protein eS17.